We begin with the raw amino-acid sequence, 257 residues long: Hydroxypyruvate/pyruvate aldolase (257 aa).

H48 acts as the Proton acceptor in catalysis. Residues E152 and D178 each coordinate a divalent metal cation.

The protein belongs to the HpcH/HpaI aldolase family. Requires a divalent metal cation as cofactor.

The catalysed reaction is D-glyceraldehyde + 3-hydroxypyruvate = 2-dehydro-D-gluconate. It catalyses the reaction D-glyceraldehyde + pyruvate = 2-dehydro-3-deoxy-L-galactonate. The enzyme catalyses 2-dehydro-3-deoxy-D-gluconate = D-glyceraldehyde + pyruvate. Aldolase which can catalyze in vitro the aldolisation reaction between hydroxypyruvate (HPA) or pyruvate (PA) and D-glyceraldehyde (D-GA). The condensation of hydroxypyruvate and D-glyceraldehyde produces 2-dehydro-D-gluconate as the major product. The condensation of pyruvate and D-glyceraldehyde produces 2-dehydro-3-deoxy-L-galactonate as the major product and 2-dehydro-3-deoxy-D-gluconate. This is Hydroxypyruvate/pyruvate aldolase from Roseovarius nubinhibens (strain ATCC BAA-591 / DSM 15170 / ISM).